Here is a 408-residue protein sequence, read N- to C-terminus: Multifunctional CCA protein (408 aa).

2 residues coordinate ATP: Gly8 and Arg11. Residues Gly8 and Arg11 each contribute to the CTP site. Mg(2+) contacts are provided by Asp21 and Asp23. Arg91, Arg137, and Arg140 together coordinate ATP. The CTP site is built by Arg91, Arg137, and Arg140. One can recognise an HD domain in the interval 228–329; it reads SGVHTLMVLE…VKLFDKADFW (102 aa).

The protein belongs to the tRNA nucleotidyltransferase/poly(A) polymerase family. Bacterial CCA-adding enzyme type 1 subfamily. As to quaternary structure, monomer. Can also form homodimers and oligomers. It depends on Mg(2+) as a cofactor. Ni(2+) serves as cofactor.

The enzyme catalyses a tRNA precursor + 2 CTP + ATP = a tRNA with a 3' CCA end + 3 diphosphate. It catalyses the reaction a tRNA with a 3' CCA end + 2 CTP + ATP = a tRNA with a 3' CCACCA end + 3 diphosphate. In terms of biological role, catalyzes the addition and repair of the essential 3'-terminal CCA sequence in tRNAs without using a nucleic acid template. Adds these three nucleotides in the order of C, C, and A to the tRNA nucleotide-73, using CTP and ATP as substrates and producing inorganic pyrophosphate. tRNA 3'-terminal CCA addition is required both for tRNA processing and repair. Also involved in tRNA surveillance by mediating tandem CCA addition to generate a CCACCA at the 3' terminus of unstable tRNAs. While stable tRNAs receive only 3'-terminal CCA, unstable tRNAs are marked with CCACCA and rapidly degraded. This is Multifunctional CCA protein from Shewanella piezotolerans (strain WP3 / JCM 13877).